The sequence spans 96 residues: UPF0184 protein CG14818 (96 aa).

Disordered regions lie at residues 1–28 (MSPK…LQEM) and 70–96 (IAEE…AAPK). Residues 8-21 (DPSSSGDSGNTNVQ) show a composition bias toward polar residues. A coiled-coil region spans residues 21–77 (QEADLQEMEDVNNSLDALSCALDAVEQRTDDIMSQLRELLNSNREIRRLIAEENDNA). Residues 72–85 (EENDNAPESGDDNM) show a composition bias toward acidic residues.

This sequence belongs to the UPF0184 (EST00098) family.

The protein is UPF0184 protein CG14818 of Drosophila melanogaster (Fruit fly).